A 314-amino-acid chain; its full sequence is Ferrochelatase (314 aa).

Positions 188 and 269 each coordinate Fe cation.

Belongs to the ferrochelatase family.

It localises to the cytoplasm. The catalysed reaction is heme b + 2 H(+) = protoporphyrin IX + Fe(2+). Its pathway is porphyrin-containing compound metabolism; protoheme biosynthesis; protoheme from protoporphyrin-IX: step 1/1. Functionally, catalyzes the ferrous insertion into protoporphyrin IX. In Campylobacter fetus subsp. fetus (strain 82-40), this protein is Ferrochelatase.